The primary structure comprises 350 residues: Atypical chemokine receptor 4 (350 aa).

At 1–42 (MALEQNQSTDYYYEENEMNGTYDYSQYELICIKEDVREFAKV) the chain is on the extracellular side. N-linked (GlcNAc...) asparagine glycans are attached at residues Asn-6 and Asn-19. Residues 43 to 63 (FLPVFLTIVFVIGLAGNSMVV) form a helical membrane-spanning segment. At 64–87 (AIYAYYKKQRTKTDVYILNLAVAD) the chain is on the cytoplasmic side. A helical transmembrane segment spans residues 88 to 108 (LLLLFTLPFWAVNAVHGWVLG). The Extracellular portion of the chain corresponds to 109-113 (KIMCK). Residues Cys-112 and Cys-184 are joined by a disulfide bond. Residues 114–134 (ITSALYTLNFVSGMQFLACIS) form a helical membrane-spanning segment. Topologically, residues 135–154 (IDRYVAVTKVPSQSGVGKPC) are cytoplasmic. The helical transmembrane segment at 155–175 (WIICFCVWMAAILLSIPQLVF) threads the bilayer. Over 176-201 (YTVNDNARCIPIFPRYLGTSMKALIQ) the chain is Extracellular. The chain crosses the membrane as a helical span at residues 202 to 222 (MLEICIGFVVPFLIMGVCYFI). Over 223–240 (TARTLMKMPNIKISRPLK) the chain is Cytoplasmic. Residues 241-261 (VLLTVVIVFIVTQLPYNIVKF) traverse the membrane as a helical segment. At 262-289 (CRAIDIIYSLITSCNMSKRMDIAIQVTE) the chain is on the extracellular side. The chain crosses the membrane as a helical span at residues 290 to 310 (SIALFHSCLNPILYVFMGASF). Topologically, residues 311-350 (KNYVMKVAKKYGSWRRQRQSVEEFPFDSEGPTEPTSTFSI) are cytoplasmic.

This sequence belongs to the G-protein coupled receptor 1 family. Atypical chemokine receptor subfamily. Forms heteromers with CXCR3. Interacts with ARRB1 and ARRB2. The Ser/Thr residues in the C-terminal cytoplasmic tail may be phosphorylated. As to expression, predominantly expressed in heart. Lower expression in lung, pancreas, spleen, colon, skeletal muscle and small intestine.

Its subcellular location is the early endosome. It is found in the recycling endosome. The protein localises to the cell membrane. Its function is as follows. Atypical chemokine receptor that controls chemokine levels and localization via high-affinity chemokine binding that is uncoupled from classic ligand-driven signal transduction cascades, resulting instead in chemokine sequestration, degradation, or transcytosis. Also known as interceptor (internalizing receptor) or chemokine-scavenging receptor or chemokine decoy receptor. Acts as a receptor for chemokines CCL2, CCL8, CCL13, CCL19, CCL21 and CCL25. Chemokine-binding does not activate G-protein-mediated signal transduction but instead induces beta-arrestin recruitment, leading to ligand internalization. Plays an important role in controlling the migration of immune and cancer cells that express chemokine receptors CCR7 and CCR9, by reducing the availability of CCL19, CCL21, and CCL25 through internalization. Negatively regulates CXCR3-induced chemotaxis. Regulates T-cell development in the thymus. This chain is Atypical chemokine receptor 4 (ACKR4), found in Homo sapiens (Human).